We begin with the raw amino-acid sequence, 449 residues long: 3-phosphoshikimate 1-carboxyvinyltransferase (449 aa).

3 residues coordinate 3-phosphoshikimate: K28, S29, and R33. A phosphoenolpyruvate-binding site is contributed by K28. Phosphoenolpyruvate-binding residues include G105 and R133. 3-phosphoshikimate is bound by residues S179, Q181, D332, and K359. Q181 serves as a coordination point for phosphoenolpyruvate. The active-site Proton acceptor is the D332. Residues R363 and R406 each contribute to the phosphoenolpyruvate site.

It belongs to the EPSP synthase family. In terms of assembly, monomer.

It localises to the cytoplasm. The catalysed reaction is 3-phosphoshikimate + phosphoenolpyruvate = 5-O-(1-carboxyvinyl)-3-phosphoshikimate + phosphate. The protein operates within metabolic intermediate biosynthesis; chorismate biosynthesis; chorismate from D-erythrose 4-phosphate and phosphoenolpyruvate: step 6/7. Functionally, catalyzes the transfer of the enolpyruvyl moiety of phosphoenolpyruvate (PEP) to the 5-hydroxyl of shikimate-3-phosphate (S3P) to produce enolpyruvyl shikimate-3-phosphate and inorganic phosphate. The polypeptide is 3-phosphoshikimate 1-carboxyvinyltransferase (Nitrobacter winogradskyi (strain ATCC 25391 / DSM 10237 / CIP 104748 / NCIMB 11846 / Nb-255)).